Reading from the N-terminus, the 198-residue chain is Armadillo repeat-containing protein 7 (198 aa).

ARM repeat units follow at residues glutamine 57 to glycine 99 and leucine 100 to proline 140. Serine 169 bears the Phosphoserine mark.

Component of the minor spliceosome. Within this complex, interacts with RBM48.

Its function is as follows. As a component of the minor spliceosome, involved in the splicing of U12-type introns in pre-mRNAs. This Mus musculus (Mouse) protein is Armadillo repeat-containing protein 7 (Armc7).